The primary structure comprises 132 residues: uncharacterized protein (132 aa).

The interval H39 to T93 is disordered. The segment covering L56 to G72 has biased composition (basic and acidic residues).

This is an uncharacterized protein from Homo sapiens (Human).